The chain runs to 318 residues: UPF0725 protein At3g44770 (318 aa).

It belongs to the UPF0725 (EMB2204) family.

The polypeptide is UPF0725 protein At3g44770 (Arabidopsis thaliana (Mouse-ear cress)).